A 372-amino-acid polypeptide reads, in one-letter code: Cytochrome b (372 aa).

Transmembrane regions (helical) follow at residues 25–45 (FGSM…FLAI), 69–90 (WIIQ…YTHI), 105–125 (WLSG…GYVL), and 170–190 (FFAL…IHII). The heme b site is built by H75 and H89. H174 and H188 together coordinate heme b. Residue H193 participates in a ubiquinone binding. The next 4 helical transmembrane spans lie at 218-238 (YKDT…MSFM), 280-300 (LGGT…PFTH), 312-332 (LTQI…WSAT), and 339-358 (FIFI…IINP).

It belongs to the cytochrome b family. As to quaternary structure, the cytochrome bc1 complex contains 3 respiratory subunits (MT-CYB, CYC1 and UQCRFS1), 2 core proteins (UQCRC1 and UQCRC2) and probably 6 low-molecular weight proteins. Requires heme b as cofactor.

The protein resides in the mitochondrion inner membrane. Functionally, component of the ubiquinol-cytochrome c reductase complex (complex III or cytochrome b-c1 complex) that is part of the mitochondrial respiratory chain. The b-c1 complex mediates electron transfer from ubiquinol to cytochrome c. Contributes to the generation of a proton gradient across the mitochondrial membrane that is then used for ATP synthesis. The polypeptide is Cytochrome b (MT-CYB) (Hydrophis semperi (Lake Taal snake)).